A 272-amino-acid polypeptide reads, in one-letter code: MCEHNLLNSGYVGSLLNFTSPEPFYFANLRPNGTQLATLSPALSYTRRDVCSLPWTSSPCASPPQSRAFSGYSQSYLSNSVSISINRHVSDKAAAGEEPNKYYFQDSSRKVEERCRHNQSYPSDASIPSSVNINPAKYEYPNVETSLHGSSLHNQGFELNSNSPTVNDGIKQSVSLSMSLQSSVTPVCNRSSDGLPWCPTQVRSRRKRKPYTKQQIAELENEFLANEFINRQKRKELSDRLNLSDQQVKIWFQNRRMKKKRLVMREQTLSLF.

The segment at residues S204–V263 is a DNA-binding region (homeobox).

This sequence belongs to the Abd-B homeobox family.

The protein resides in the nucleus. Its function is as follows. Sequence-specific transcription factor which is part of a developmental regulatory system that provides cells with specific positional identities on the anterior-posterior axis. This chain is Homeobox protein Hox-D12 (HOXD12), found in Heterodontus francisci (Horn shark).